We begin with the raw amino-acid sequence, 57 residues long: COP9 signalosome complex subunit 9 (57 aa).

Phosphothreonine is present on Thr26.

This sequence belongs to the CSN9 family. As to quaternary structure, component of the CSN complex, composed of COPS1/GPS1, COPS2, COPS3, COPS4, COPS5, COPS6, COPS7 (COPS7A or COPS7B), COPS8 and COPS9. In the complex, it interacts directly with COPS3, COPS5 and COPS6.

The protein resides in the nucleus. The protein localises to the cytoplasm. It localises to the nucleoplasm. Component of the COP9 signalosome complex (CSN), a complex involved in various cellular and developmental processes. The CSN complex is an essential regulator of the ubiquitin (Ubl) conjugation pathway by mediating the deneddylation of the cullin subunits of SCF-type E3 ligase complexes, leading to decrease the Ubl ligase activity of SCF-type complexes such as SCF, CSA or DDB2. The complex is also involved in phosphorylation of p53/TP53, c-jun/JUN, IkappaBalpha/NFKBIA, ITPK1 and IRF8/ICSBP, possibly via its association with CK2 and PKD kinases. CSN-dependent phosphorylation of TP53 and JUN promotes and protects degradation by the Ubl system, respectively. Plays a role in cell proliferation. This chain is COP9 signalosome complex subunit 9, found in Mus musculus (Mouse).